A 240-amino-acid polypeptide reads, in one-letter code: LexA repressor (240 aa).

The segment at residues 26–46 is a DNA-binding region (H-T-H motif); the sequence is FDEMKEALDLASKSGIHRLIT. Active-site for autocatalytic cleavage activity residues include Ser161 and Lys199.

This sequence belongs to the peptidase S24 family. As to quaternary structure, homodimer.

It catalyses the reaction Hydrolysis of Ala-|-Gly bond in repressor LexA.. Functionally, represses a number of genes involved in the response to DNA damage (SOS response), including recA and lexA. In the presence of single-stranded DNA, RecA interacts with LexA causing an autocatalytic cleavage which disrupts the DNA-binding part of LexA, leading to derepression of the SOS regulon and eventually DNA repair. This chain is LexA repressor, found in Brucella ovis (strain ATCC 25840 / 63/290 / NCTC 10512).